A 56-amino-acid chain; its full sequence is Large ribosomal subunit protein bL32 (56 aa).

Residues 1 to 16 (MAVQKSKKSRARRGMR) are compositionally biased toward basic residues. Residues 1–56 (MAVQKSKKSRARRGMRRSHDAISGPSLTVDQTSGETHRRHHVTADGYYKGVQVISK) are disordered. Over residues 25 to 34 (PSLTVDQTSG) the composition is skewed to polar residues.

Belongs to the bacterial ribosomal protein bL32 family.

This Pseudoalteromonas translucida (strain TAC 125) protein is Large ribosomal subunit protein bL32.